The chain runs to 73 residues: Translation initiation factor IF-1 (73 aa).

Residues 1 to 73 (MAKKDGVIEI…NRGRIVYRYR (73 aa)) form the S1-like domain.

Belongs to the IF-1 family. Component of the 30S ribosomal translation pre-initiation complex which assembles on the 30S ribosome in the order IF-2 and IF-3, IF-1 and N-formylmethionyl-tRNA(fMet); mRNA recruitment can occur at any time during PIC assembly.

The protein resides in the cytoplasm. In terms of biological role, one of the essential components for the initiation of protein synthesis. Stabilizes the binding of IF-2 and IF-3 on the 30S subunit to which N-formylmethionyl-tRNA(fMet) subsequently binds. Helps modulate mRNA selection, yielding the 30S pre-initiation complex (PIC). Upon addition of the 50S ribosomal subunit IF-1, IF-2 and IF-3 are released leaving the mature 70S translation initiation complex. The sequence is that of Translation initiation factor IF-1 from Acidothermus cellulolyticus (strain ATCC 43068 / DSM 8971 / 11B).